The chain runs to 141 residues: Large ribosomal subunit protein uL11 (141 aa).

The protein belongs to the universal ribosomal protein uL11 family. As to quaternary structure, part of the ribosomal stalk of the 50S ribosomal subunit. Interacts with L10 and the large rRNA to form the base of the stalk. L10 forms an elongated spine to which L12 dimers bind in a sequential fashion forming a multimeric L10(L12)X complex. Post-translationally, one or more lysine residues are methylated.

Its function is as follows. Forms part of the ribosomal stalk which helps the ribosome interact with GTP-bound translation factors. The polypeptide is Large ribosomal subunit protein uL11 (Synechococcus sp. (strain RCC307)).